The following is a 383-amino-acid chain: 8-amino-7-oxononanoate synthase (383 aa).

R21 is a substrate binding site. 108–109 (GF) is a binding site for pyridoxal 5'-phosphate. H133 serves as a coordination point for substrate. Residues S179, H207, and T233 each contribute to the pyridoxal 5'-phosphate site. K236 carries the N6-(pyridoxal phosphate)lysine modification. T350 is a substrate binding site.

This sequence belongs to the class-II pyridoxal-phosphate-dependent aminotransferase family. BioF subfamily. Homodimer. It depends on pyridoxal 5'-phosphate as a cofactor.

It catalyses the reaction 6-carboxyhexanoyl-[ACP] + L-alanine + H(+) = (8S)-8-amino-7-oxononanoate + holo-[ACP] + CO2. It functions in the pathway cofactor biosynthesis; biotin biosynthesis. In terms of biological role, catalyzes the decarboxylative condensation of pimeloyl-[acyl-carrier protein] and L-alanine to produce 8-amino-7-oxononanoate (AON), [acyl-carrier protein], and carbon dioxide. This is 8-amino-7-oxononanoate synthase from Cronobacter sakazakii (strain ATCC BAA-894) (Enterobacter sakazakii).